The primary structure comprises 554 residues: Probable pectinesterase/pectinesterase inhibitor 6 (554 aa).

The first 32 residues, 1 to 32 (MDHKILLTPPKSLYTKCIITIIYVVSISHLNA), serve as a signal peptide directing secretion. The interval 29–183 (HLNAHFITSC…TKSISNSLAV (155 aa)) is pectinesterase inhibitor 6. N-linked (GlcNAc...) asparagine glycosylation is found at N119 and N172. A pectinesterase 6 region spans residues 250–540 (DLVVAKDGSG…FTVENFLDGN (291 aa)). Substrate is bound by residues T327 and Q357. D380 serves as the catalytic Proton donor; for pectinesterase activity. An intrachain disulfide couples C394 to C414. D401 functions as the Nucleophile; for pectinesterase activity in the catalytic mechanism. Substrate is bound by residues R460 and W462.

The protein in the N-terminal section; belongs to the PMEI family. In the C-terminal section; belongs to the pectinesterase family. In terms of tissue distribution, expressed in rosette leaves, flower and siliques.

The protein resides in the secreted. Its subcellular location is the cell wall. The catalysed reaction is [(1-&gt;4)-alpha-D-galacturonosyl methyl ester](n) + n H2O = [(1-&gt;4)-alpha-D-galacturonosyl](n) + n methanol + n H(+). It participates in glycan metabolism; pectin degradation; 2-dehydro-3-deoxy-D-gluconate from pectin: step 1/5. Acts in the modification of cell walls via demethylesterification of cell wall pectin. This is Probable pectinesterase/pectinesterase inhibitor 6 (PME6) from Arabidopsis thaliana (Mouse-ear cress).